The following is a 525-amino-acid chain: BTB/POZ domain-containing protein 2 (525 aa).

A disordered region spans residues 1 to 86 (MAAGGSGGRA…AEEAAGPGAA (86 aa)). Positions 16 to 26 (VGVGPGTGGSP) are enriched in gly residues. Low complexity predominate over residues 27-55 (GPSANAAATPAPGNAAAAAAAAAAAAAAP). A compositionally biased stretch (pro residues) spans 56–65 (GPTPPAPPGP). Positions 66–86 (GTDAQAAGAERAEEAAGPGAA) are enriched in low complexity. The 71-residue stretch at 117–187 (CDVHFLVGKG…LYSDEVQIGP (71 aa)) folds into the BTB domain.

Interacts with topoisomerase 1 and with TRIM5 isoform Delta.

It localises to the cytoplasm. In Homo sapiens (Human), this protein is BTB/POZ domain-containing protein 2 (BTBD2).